We begin with the raw amino-acid sequence, 123 residues long: ATP synthase epsilon chain (123 aa).

This sequence belongs to the ATPase epsilon chain family. F-type ATPases have 2 components, CF(1) - the catalytic core - and CF(0) - the membrane proton channel. CF(1) has five subunits: alpha(3), beta(3), gamma(1), delta(1), epsilon(1). CF(0) has three main subunits: a, b and c.

It localises to the cell inner membrane. Its function is as follows. Produces ATP from ADP in the presence of a proton gradient across the membrane. The sequence is that of ATP synthase epsilon chain (atpC) from Helicobacter pylori (strain ATCC 700392 / 26695) (Campylobacter pylori).